The following is a 282-amino-acid chain: MSQPNVSVKVGNVVFSNKAPLSLIVGPCQIESRDHAFEMAGRIKAIADQAGIGFVYKSSYDKANRTSLSAARGIGLEKAIAIFADLKKEFGFPILTDVHTEEQCRAVSSVVDVLQIPAFLCRQTDLLVAAAKTGCVINIKKGQFLAPWDMENVLKKVTQSGNPDVMLCERGTSFGYNRLVSDMRSLPIMSSFGAPVIFDATHSVQEPGGKGDSSGGQRQFVEILARAAVAVGVAGIFLETHQDPDNAPSDGANMIEIDNLQRLIEILMNFDRLTKNELNIHA.

It belongs to the KdsA family.

It localises to the cytoplasm. The catalysed reaction is D-arabinose 5-phosphate + phosphoenolpyruvate + H2O = 3-deoxy-alpha-D-manno-2-octulosonate-8-phosphate + phosphate. It functions in the pathway carbohydrate biosynthesis; 3-deoxy-D-manno-octulosonate biosynthesis; 3-deoxy-D-manno-octulosonate from D-ribulose 5-phosphate: step 2/3. Its pathway is bacterial outer membrane biogenesis; lipopolysaccharide biosynthesis. This is 2-dehydro-3-deoxyphosphooctonate aldolase from Bartonella bacilliformis (strain ATCC 35685 / KC583 / Herrer 020/F12,63).